We begin with the raw amino-acid sequence, 150 residues long: Small ribosomal subunit protein uS13 (150 aa).

The tract at residues 131-150 is disordered; the sequence is QRTKSTFRRGPTVGVSRRKK.

It belongs to the universal ribosomal protein uS13 family. In terms of assembly, part of the 30S ribosomal subunit. Forms a loose heterodimer with protein S19. Forms two bridges to the 50S subunit in the 70S ribosome.

Located at the top of the head of the 30S subunit, it contacts several helices of the 16S rRNA. In the 70S ribosome it contacts the 23S rRNA (bridge B1a) and protein L5 of the 50S subunit (bridge B1b), connecting the 2 subunits; these bridges are implicated in subunit movement. In Methanocaldococcus jannaschii (strain ATCC 43067 / DSM 2661 / JAL-1 / JCM 10045 / NBRC 100440) (Methanococcus jannaschii), this protein is Small ribosomal subunit protein uS13.